The primary structure comprises 85 residues: NADH-ubiquinone oxidoreductase chain 4L (85 aa).

2 helical membrane passes run 21–41 (LLVT…LLVY) and 51–71 (FIFL…LVSL).

It belongs to the complex I subunit 4L family.

The protein localises to the mitochondrion membrane. It catalyses the reaction a ubiquinone + NADH + 5 H(+)(in) = a ubiquinol + NAD(+) + 4 H(+)(out). Its function is as follows. Core subunit of the mitochondrial membrane respiratory chain NADH dehydrogenase (Complex I) that is believed to belong to the minimal assembly required for catalysis. Complex I functions in the transfer of electrons from NADH to the respiratory chain. The immediate electron acceptor for the enzyme is believed to be ubiquinone. The sequence is that of NADH-ubiquinone oxidoreductase chain 4L (ND4L) from Artemia franciscana (Brine shrimp).